We begin with the raw amino-acid sequence, 705 residues long: Tyrosine decarboxylase (705 aa).

The segment covering 22 to 32 has biased composition (polar residues); it reads RIRNSLSPSRP. Residues 22-81 form a disordered region; sequence RIRNSLSPSRPSMSEATATGSSSSSRASTTIPSTPNMDVTPTVEDPRQNDNNASGMTRDE. Positions 33-55 are enriched in low complexity; the sequence is SMSEATATGSSSSSRASTTIPST. K380 is subject to N6-(pyridoxal phosphate)lysine. Residues 554–620 adopt a coiled-coil conformation; that stretch reads VKAVIAEEDE…AQKQHESLAK (67 aa). The segment covering 667–678 has biased composition (polar residues); the sequence is HSQRPNRLSQSP. Positions 667-687 are disordered; that stretch reads HSQRPNRLSQSPGSAGSAFFD.

This sequence belongs to the group II decarboxylase family. It depends on pyridoxal 5'-phosphate as a cofactor. Expressed in the gonadal sheath projections in between the oocytes, in head RIM motor neurons and RIC interneurons.

It is found in the cytoplasm. The protein resides in the cell projection. It localises to the axon. The protein localises to the perikaryon. It catalyses the reaction L-tyrosine + H(+) = tyramine + CO2. In terms of biological role, required for the decarboxylation of tyrosine to tyramine, a precursor of octopamine but probably also itself a neurotransmitter. Involved in the regulation of egg laying, which is inhibited by tyramine. Also involved in controlling locomotion and head movements. Due to its involvement in octopamine biosynthesis, also required for crtc-1-dependent regulation of AMPK-mediated longevity which requires octopamine signaling. The sequence is that of Tyrosine decarboxylase from Caenorhabditis elegans.